We begin with the raw amino-acid sequence, 1820 residues long: uncharacterized protein (1820 aa).

Disordered regions lie at residues 1–73, 86–158, 226–260, 286–366, 453–497, 519–548, 577–597, 619–689, and 735–830; these read MQWT…TLSG, TTTT…VRSA, GSSG…NNNY, EERA…QETE, DVQD…RNLS, LSSI…TDTA, GNSS…PPTP, GAGT…TASG, and HSHN…TPSS. Positions 20-31 are enriched in polar residues; that stretch reads NRNSIEQRTPAN. Over residues 86–128 the composition is skewed to low complexity; that stretch reads TTTTTIIESSSSTNTTLEKNSPSPAGGSCSSGSGSLSPAYLQH. Residues 129–146 are compositionally biased toward basic residues; the sequence is HLQHHGSPLHHLQVHHHT. A compositionally biased stretch (low complexity) spans 247–259; that stretch reads SNSSNCSSQFNNN. Residues 265 to 308 are a coiled coil; that stretch reads VDSLDDMLRKLTELEQRVIEAEERAEEAEDKVRAMEQRLSEWPK. The segment covering 294-305 has biased composition (basic and acidic residues); that stretch reads DKVRAMEQRLSE. Residues 346–358 are compositionally biased toward low complexity; it reads ASGGATAGAAGSG. A coiled-coil region spans residues 362–438; it reads TQETEKTITS…LKNHIANQSQ (77 aa). Positions 453-463 are enriched in polar residues; the sequence is DVQDFTGSGSN. Ser542 and Ser543 each carry phosphoserine. Residues 623–632 show a composition bias toward low complexity; it reads GTSTAESTAS. Gly residues predominate over residues 655-669; the sequence is HGSGTGIGTGDGHGT. Residues 738-769 are compositionally biased toward low complexity; the sequence is NSSSTDNTETSTSGSASSPSKSLKTSSSLSPA. Residues 787–818 show a composition bias toward polar residues; the sequence is QSRTSTTPSSRINQHLQPSQHQHHTLSNQNHG. 2 consecutive PH domains span residues 909–1003 and 1017–1124; these read SLEK…NVQR and KPTV…VVSG. Phosphoserine occurs at positions 1073, 1075, and 1077. Residues 1159-1378 form the MyTH4 domain; sequence HTKDTITAPL…PSRMEVLSIL (220 aa). In terms of domain architecture, FERM spans 1389 to 1712; sequence HAIPVHMMNS…DYMNALGHTV (324 aa). Disordered stretches follow at residues 1713-1748 and 1764-1820; these read PGTP…ATGF and ATHT…QRIK. Residues 1714–1724 are compositionally biased toward polar residues; sequence GTPQMNSLTRN. Low complexity predominate over residues 1764–1781; sequence ATHTLNSNHSHTLSSSHH. Residues 1805-1820 show a composition bias toward basic and acidic residues; sequence HQPDILKSTPDHQRIK.

This is an uncharacterized protein from Drosophila melanogaster (Fruit fly).